A 557-amino-acid chain; its full sequence is Tryptophan 2-monooxygenase (557 aa).

FMN is bound by residues Ser-49, Glu-69, Arg-71, Arg-77, and Arg-98. Arg-98 is a binding site for substrate.

Belongs to the tryptophan 2-monooxygenase family. As to quaternary structure, monomer. It depends on FMN as a cofactor.

The catalysed reaction is L-tryptophan + O2 = indole-3-acetamide + CO2 + H2O. The protein operates within plant hormone metabolism; auxin biosynthesis. The chain is Tryptophan 2-monooxygenase (iaaM) from Pseudomonas savastanoi (Pseudomonas syringae pv. savastanoi).